The chain runs to 688 residues: Glycine--tRNA ligase beta subunit (688 aa).

Belongs to the class-II aminoacyl-tRNA synthetase family. Tetramer of two alpha and two beta subunits.

The protein localises to the cytoplasm. The catalysed reaction is tRNA(Gly) + glycine + ATP = glycyl-tRNA(Gly) + AMP + diphosphate. This Shewanella oneidensis (strain ATCC 700550 / JCM 31522 / CIP 106686 / LMG 19005 / NCIMB 14063 / MR-1) protein is Glycine--tRNA ligase beta subunit.